The following is a 403-amino-acid chain: Poly(rC)-binding protein 4 (403 aa).

3 consecutive KH domains span residues 17-67, 101-154, and 241-293; these read TLTL…TITG, PVTL…TVSG, and TSSQ…TITG.

As to expression, widely expressed, with highest levels in testis and lowest in heart.

Its subcellular location is the cytoplasm. Single-stranded nucleic acid binding protein that binds preferentially to oligo dC. The protein is Poly(rC)-binding protein 4 (Pcbp4) of Mus musculus (Mouse).